A 101-amino-acid chain; its full sequence is Protein S100-A7A (101 aa).

EF-hand domains follow at residues 13–48 (MIDM…SACD) and 50–85 (KGIH…IAAD). Residues histidine 18, glutamate 28, and glutamate 38 each coordinate Zn(2+). Residues aspartate 63 and asparagine 65 each contribute to the Ca(2+) site. Residue glutamate 66 participates in Zn(2+) binding. Positions 67, 69, and 74 each coordinate Ca(2+). Residues histidine 87 and histidine 91 each coordinate Zn(2+).

The protein belongs to the S-100 family. As to expression, overexpressed in psoriasis.

The protein localises to the cytoplasm. Its function is as follows. May be involved in epidermal differentiation and inflammation and might therefore be important for the pathogenesis of psoriasis and other diseases. The protein is Protein S100-A7A (S100A7A) of Homo sapiens (Human).